The chain runs to 214 residues: Probable GTP-binding protein EngB (214 aa).

The region spanning N22–P194 is the EngB-type G domain. Residues G30 to S37, G57 to L61, D75 to G78, T142 to D145, and F173 to A175 contribute to the GTP site. Residues S37 and T59 each coordinate Mg(2+).

It belongs to the TRAFAC class TrmE-Era-EngA-EngB-Septin-like GTPase superfamily. EngB GTPase family. The cofactor is Mg(2+).

Functionally, necessary for normal cell division and for the maintenance of normal septation. This chain is Probable GTP-binding protein EngB, found in Citrifermentans bemidjiense (strain ATCC BAA-1014 / DSM 16622 / JCM 12645 / Bem) (Geobacter bemidjiensis).